A 253-amino-acid polypeptide reads, in one-letter code: Large ribosomal subunit protein uL2C (253 aa).

This sequence belongs to the universal ribosomal protein uL2 family. In terms of assembly, component of the large ribosomal subunit (LSU). Mature yeast ribosomes consist of a small (40S) and a large (60S) subunit. The 40S small subunit contains 1 molecule of ribosomal RNA (18S rRNA) and at least 33 different proteins. The large 60S subunit contains 3 rRNA molecules (25S, 5.8S and 5S rRNA) and at least 46 different proteins.

It localises to the cytoplasm. Its subcellular location is the nucleus. Its function is as follows. Component of the ribosome, a large ribonucleoprotein complex responsible for the synthesis of proteins in the cell. The small ribosomal subunit (SSU) binds messenger RNAs (mRNAs) and translates the encoded message by selecting cognate aminoacyl-transfer RNA (tRNA) molecules. The large subunit (LSU) contains the ribosomal catalytic site termed the peptidyl transferase center (PTC), which catalyzes the formation of peptide bonds, thereby polymerizing the amino acids delivered by tRNAs into a polypeptide chain. The nascent polypeptides leave the ribosome through a tunnel in the LSU and interact with protein factors that function in enzymatic processing, targeting, and the membrane insertion of nascent chains at the exit of the ribosomal tunnel. This is Large ribosomal subunit protein uL2C (rpl803) from Schizosaccharomyces pombe (strain 972 / ATCC 24843) (Fission yeast).